Here is a 174-residue protein sequence, read N- to C-terminus: Crossover junction endodeoxyribonuclease RuvC (174 aa).

Active-site residues include D8, E67, and D139. Mg(2+) contacts are provided by D8, E67, and D139.

This sequence belongs to the RuvC family. Homodimer which binds Holliday junction (HJ) DNA. The HJ becomes 2-fold symmetrical on binding to RuvC with unstacked arms; it has a different conformation from HJ DNA in complex with RuvA. In the full resolvosome a probable DNA-RuvA(4)-RuvB(12)-RuvC(2) complex forms which resolves the HJ. Mg(2+) serves as cofactor.

The protein resides in the cytoplasm. The enzyme catalyses Endonucleolytic cleavage at a junction such as a reciprocal single-stranded crossover between two homologous DNA duplexes (Holliday junction).. In terms of biological role, the RuvA-RuvB-RuvC complex processes Holliday junction (HJ) DNA during genetic recombination and DNA repair. Endonuclease that resolves HJ intermediates. Cleaves cruciform DNA by making single-stranded nicks across the HJ at symmetrical positions within the homologous arms, yielding a 5'-phosphate and a 3'-hydroxyl group; requires a central core of homology in the junction. The consensus cleavage sequence is 5'-(A/T)TT(C/G)-3'. Cleavage occurs on the 3'-side of the TT dinucleotide at the point of strand exchange. HJ branch migration catalyzed by RuvA-RuvB allows RuvC to scan DNA until it finds its consensus sequence, where it cleaves and resolves the cruciform DNA. This is Crossover junction endodeoxyribonuclease RuvC from Pseudomonas syringae pv. syringae (strain B728a).